The chain runs to 41 residues: MKPPNPTNPNDQNVELNRTSLYWGLLLIFVLAVPFSNYFFN.

Residues Ser-20–Phe-40 form a helical membrane-spanning segment.

This sequence belongs to the PsbL family. PSII is composed of 1 copy each of membrane proteins PsbA, PsbB, PsbC, PsbD, PsbE, PsbF, PsbH, PsbI, PsbJ, PsbK, PsbL, PsbM, PsbT, PsbX, PsbY, PsbZ, Psb30/Ycf12, at least 3 peripheral proteins of the oxygen-evolving complex and a large number of cofactors. It forms dimeric complexes.

The protein localises to the plastid. It localises to the chloroplast thylakoid membrane. In terms of biological role, one of the components of the core complex of photosystem II (PSII). PSII is a light-driven water:plastoquinone oxidoreductase that uses light energy to abstract electrons from H(2)O, generating O(2) and a proton gradient subsequently used for ATP formation. It consists of a core antenna complex that captures photons, and an electron transfer chain that converts photonic excitation into a charge separation. This subunit is found at the monomer-monomer interface and is required for correct PSII assembly and/or dimerization. The sequence is that of Photosystem II reaction center protein L from Pinus koraiensis (Korean pine).